The sequence spans 714 residues: Stellatatriene synthase (714 aa).

The stellata-2,6,19-trien synthase stretch occupies residues 1-325 (MEYKFSTVVD…RYNSSGSFSD (325 aa)). The Mg(2+) site is built by Asp-92 and Asp-96. Positions 92 to 96 (DDVTD) match the DDXXD motif 1 motif. Positions 276–284 (YLKIVEEYK) match the NSE motif motif. A geranylgeranyl diphosphate synthase region spans residues 326-713 (HQLELMKNGV…LRLIMELLKT (388 aa)). The segment at 332–356 (KNGVPKDPASGSTNGTSNGTSNGTS) is disordered. Positions 341–356 (SGSTNGTSNGTSNGTS) are enriched in low complexity. Positions 434, 437, and 466 each coordinate isopentenyl diphosphate. Mg(2+) contacts are provided by Asp-473 and Asp-477. The DDXXD motif 2 signature appears at 473–477 (DDVED). Residue Arg-482 coordinates dimethylallyl diphosphate. Arg-483 contributes to the isopentenyl diphosphate binding site. Dimethylallyl diphosphate-binding residues include Lys-560, Thr-561, Gln-596, Asn-603, Lys-613, and Lys-623.

The protein in the N-terminal section; belongs to the terpene synthase family. It in the C-terminal section; belongs to the FPP/GGPP synthase family. In terms of assembly, hexamer.

It carries out the reaction 4 isopentenyl diphosphate + dimethylallyl diphosphate = (2E,6E,10E,14E)-geranylfarnesyl diphosphate + 4 diphosphate. The catalysed reaction is (2E,6E,10E,14E)-geranylfarnesyl diphosphate = stellata-2,6,19-triene + diphosphate. It functions in the pathway secondary metabolite biosynthesis; terpenoid biosynthesis. Multifunctional diterpene synthase; part of the gene cluster that mediates the biosynthesis of the sesterterpene stellatic acid. The first step in the pathway is performed by the stellatatriene synthase that possesses both prenyl transferase and terpene cyclase activity, converting isopentenyl diphosphate and dimethylallyl diphosphate into geranylgeranyl diphosphate (GGDP) and then converting GGDP into stellata-2,6,19-triene. The cytochrome P450 monooxygenase Stl-P450 then catalyzes three successive oxidation reactions on the C-20 methyl group to generate the carboxylic acid of stellatic acid. This chain is Stellatatriene synthase, found in Emericella variicolor (Aspergillus stellatus).